Reading from the N-terminus, the 652-residue chain is Maternal embryonic leucine zipper kinase (652 aa).

The 253-residue stretch at 13 to 265 (YELHETIGTG…VKHLLSHPWL (253 aa)) folds into the Protein kinase domain. Residues 19-27 (IGTGGFAKV) and Lys42 each bind ATP. Residue Asp134 is the Proton acceptor of the active site. The residue at position 169 (Thr169) is a Phosphothreonine; by autocatalysis. At Ser173 the chain carries Phosphoserine; by autocatalysis. The interval 284-323 (VDEDCVTELSVFYKCSRTSTSRLISEWNYDHITASYLLLH) is UBA-like. Residues 328–652 (HGKPVRLKRP…VEDILSSCKV (325 aa)) form an autoinhibitory region region. 5 positions are modified to phosphothreonine: Thr415, Thr450, Thr452, Thr482, and Thr484. Residues 443–492 (FLHPAPWTPTPRRKQNEKKGILTTPNKNSHTKEKNQSKETPTKKPITTGE) form a disordered region. A compositionally biased stretch (basic and acidic residues) spans 472–484 (HTKEKNQSKETPT). Residues Ser499, Ser506, and Ser518 each carry the phosphoserine modification. Positions 603–652 (SDFGKVTMQFELEVCQLSKSEMVGIRRQRLKGDAWVYKRLVEDILSSCKV) constitute a KA1 domain.

Belongs to the protein kinase superfamily. CAMK Ser/Thr protein kinase family. SNF1 subfamily. Post-translationally, autophosphorylated: autophosphorylation of the T-loop at Thr-169 and Ser-173 is required for activation. Phosphorylated by the maturation promoting factor (MPF), composed of cdk1 and a cyclin-B. Also phosphorylated by some MAPK. Phosphorylated during oocyte maturation. Dephosphorylation destabilizes the protein. In terms of processing, degraded when cells exit mitosis.

The protein localises to the cell membrane. The catalysed reaction is L-seryl-[protein] + ATP = O-phospho-L-seryl-[protein] + ADP + H(+). It carries out the reaction L-threonyl-[protein] + ATP = O-phospho-L-threonyl-[protein] + ADP + H(+). Activated by autophosphorylation of the T-loop at Thr-169 and Ser-173: in contrast to other members of the SNF1 subfamily, phosphorylation at Thr-169 is not mediated by STK11/LKB1 but via autophosphorylation instead. Its function is as follows. Serine/threonine-protein kinase involved in various processes such as cell cycle regulation, self-renewal of stem cells, apoptosis and splicing regulation. Also plays a role in primitive hematopoiesis, possibly by affecting the expression of genes critical for hematopoiesis. Plays a role in cytokinesis during early development. The polypeptide is Maternal embryonic leucine zipper kinase (melk) (Xenopus tropicalis (Western clawed frog)).